Here is a 148-residue protein sequence, read N- to C-terminus: Small ribosomal subunit protein eS19G (148 aa).

It belongs to the eukaryotic ribosomal protein eS19 family.

Its function is as follows. Elimination of the ALEP-1 gene from all somatic cells in its fully activate state may represent an alternative way to gene regulation. The protein is Small ribosomal subunit protein eS19G (RPS19G) of Ascaris suum (Pig roundworm).